The primary structure comprises 259 residues: MDPKLLFLPRFQPVDLTPAWSQINLFEGIRFAFAIYSRDYSKPLLHFQKRWALAVLDLKENSPPIYILKQLAELLKNKVCYHPPMFVSQPDLARENDQHVFVYLSREKMQKVLKEQSITFGMEAVLATTIQPYRSELALQEMLRVHNLAWPHSRTEEPDLECFIAIFASSLFIHLLELKVTNVYGREVACTFFLRRGTENRPYDVVACGTTQFTKNALGISRPAASSPEPDLTLRLSGPDQEGEEGVMKPAAVNLKKEA.

Positions 219–259 are disordered; it reads GISRPAASSPEPDLTLRLSGPDQEGEEGVMKPAAVNLKKEA.

The catalysed reaction is O-phospho-L-tyrosyl-[protein] + H2O = L-tyrosyl-[protein] + phosphate. Induces differentiation and growth of neoplastic roots (hairy roots). Seems to function as a tyrosine phosphatase. The polypeptide is Protein-tyrosine phosphatase RolB (rolB) (Rhizobium rhizogenes (Agrobacterium rhizogenes)).